We begin with the raw amino-acid sequence, 58 residues long: uncharacterized protein (58 aa).

The helical transmembrane segment at 24 to 44 (LSVYLGLATTIVCIVLFFTML) threads the bilayer.

It is found in the membrane. This is an uncharacterized protein from Haemophilus influenzae (strain ATCC 51907 / DSM 11121 / KW20 / Rd).